The following is a 420-amino-acid chain: Riboflavin biosynthesis protein RibBA (420 aa).

The tract at residues 1–202 (MTTFGTIEQA…IADLVAYRRR (202 aa)) is DHBP synthase. D-ribulose 5-phosphate is bound by residues 28-29 (RE), D33, 141-145 (RPGHT), and E165. E29 provides a ligand contact to Mg(2+). H144 contacts Mg(2+). The GTP cyclohydrolase II stretch occupies residues 203 to 420 (TEKQVELVAE…RAVVGDGIGA (218 aa)). GTP is bound at residue 253 to 257 (RVHSE). Zn(2+) contacts are provided by C258, C269, and C271. Residues Q274, 297–299 (EGR), and T319 each bind GTP. D331 acts as the Proton acceptor; for GTP cyclohydrolase activity in catalysis. The Nucleophile; for GTP cyclohydrolase activity role is filled by R333. Positions 354 and 359 each coordinate GTP.

In the N-terminal section; belongs to the DHBP synthase family. It in the C-terminal section; belongs to the GTP cyclohydrolase II family. Requires Mg(2+) as cofactor. Mn(2+) serves as cofactor. The cofactor is Zn(2+).

It catalyses the reaction D-ribulose 5-phosphate = (2S)-2-hydroxy-3-oxobutyl phosphate + formate + H(+). It carries out the reaction GTP + 4 H2O = 2,5-diamino-6-hydroxy-4-(5-phosphoribosylamino)-pyrimidine + formate + 2 phosphate + 3 H(+). Its pathway is cofactor biosynthesis; riboflavin biosynthesis; 2-hydroxy-3-oxobutyl phosphate from D-ribulose 5-phosphate: step 1/1. The protein operates within cofactor biosynthesis; riboflavin biosynthesis; 5-amino-6-(D-ribitylamino)uracil from GTP: step 1/4. Functionally, catalyzes the conversion of D-ribulose 5-phosphate to formate and 3,4-dihydroxy-2-butanone 4-phosphate. In terms of biological role, catalyzes the conversion of GTP to 2,5-diamino-6-ribosylamino-4(3H)-pyrimidinone 5'-phosphate (DARP), formate and pyrophosphate. This chain is Riboflavin biosynthesis protein RibBA, found in Salinispora arenicola (strain CNS-205).